A 345-amino-acid polypeptide reads, in one-letter code: N-acetyl-gamma-glutamyl-phosphate reductase (345 aa).

Residue Cys151 is part of the active site.

It belongs to the NAGSA dehydrogenase family. Type 1 subfamily.

Its subcellular location is the cytoplasm. It carries out the reaction N-acetyl-L-glutamate 5-semialdehyde + phosphate + NADP(+) = N-acetyl-L-glutamyl 5-phosphate + NADPH + H(+). The protein operates within amino-acid biosynthesis; L-arginine biosynthesis; N(2)-acetyl-L-ornithine from L-glutamate: step 3/4. Catalyzes the NADPH-dependent reduction of N-acetyl-5-glutamyl phosphate to yield N-acetyl-L-glutamate 5-semialdehyde. This chain is N-acetyl-gamma-glutamyl-phosphate reductase, found in Clostridium novyi (strain NT).